Reading from the N-terminus, the 211-residue chain is MAQSKSNPPQVPSGWKAVFDDEYQTWYYVDLSTNSSQWEPPRGTTWPRPKGPPPGVNNEKSSRQQADQAPPPYSSQSTPQVQAGAQAQQPRYYQPQQPQYPQYPQQQRYYPQQAPMPAAAPQQAYYGTAPSTSKGSGHGGAMMGGLLGVGAGLLGGAMLEHAFDDHNYDGPDTVVVENNYYGDDAGGSDGGFDDAGGFDGGFDDGFDGSDF.

Residues 9 to 43 (PQVPSGWKAVFDDEYQTWYYVDLSTNSSQWEPPRG) form the WW domain. A disordered region spans residues 32 to 116 (STNSSQWEPP…QRYYPQQAPM (85 aa)). Residues Lys-50 and Lys-60 each participate in a glycyl lysine isopeptide (Lys-Gly) (interchain with G-Cter in ubiquitin) cross-link. Ser-75 bears the Phosphoserine mark. Thr-78 carries the phosphothreonine modification. A compositionally biased stretch (low complexity) spans 80–116 (QVQAGAQAQQPRYYQPQQPQYPQYPQQQRYYPQQAPM).

As to quaternary structure, interacts with metacaspase MCA1.

Its subcellular location is the cytoplasm. It is found in the nucleus. The protein resides in the mitochondrion. In terms of biological role, involved in apoptosis. May play a role in nuclear function controlling cellular proliferation coupled to mitochondrial biogenesis. Causes impaired growth when overexpressed. The protein is WW domain-containing protein WWM1 (WWM1) of Saccharomyces cerevisiae (strain ATCC 204508 / S288c) (Baker's yeast).